Here is a 292-residue protein sequence, read N- to C-terminus: UDP-3-O-acyl-N-acetylglucosamine deacetylase (292 aa).

Residues histidine 76, histidine 232, and aspartate 236 each coordinate Zn(2+). Histidine 259 acts as the Proton donor in catalysis.

The protein belongs to the LpxC family. Zn(2+) is required as a cofactor.

The enzyme catalyses a UDP-3-O-[(3R)-3-hydroxyacyl]-N-acetyl-alpha-D-glucosamine + H2O = a UDP-3-O-[(3R)-3-hydroxyacyl]-alpha-D-glucosamine + acetate. The protein operates within glycolipid biosynthesis; lipid IV(A) biosynthesis; lipid IV(A) from (3R)-3-hydroxytetradecanoyl-[acyl-carrier-protein] and UDP-N-acetyl-alpha-D-glucosamine: step 2/6. Its function is as follows. Catalyzes the hydrolysis of UDP-3-O-myristoyl-N-acetylglucosamine to form UDP-3-O-myristoylglucosamine and acetate, the committed step in lipid A biosynthesis. The polypeptide is UDP-3-O-acyl-N-acetylglucosamine deacetylase (Thermodesulfovibrio yellowstonii (strain ATCC 51303 / DSM 11347 / YP87)).